The following is a 78-amino-acid chain: Large ribosomal subunit protein bL28 (78 aa).

Belongs to the bacterial ribosomal protein bL28 family.

The protein is Large ribosomal subunit protein bL28 (rpmB) of Treponema pallidum (strain Nichols).